The chain runs to 1767 residues: Trans-Golgi network-localized SYP41-interacting protein 1 (1767 aa).

Residues methionine 1–aspartate 72 are disordered. Over methionine 1–arginine 1748 the chain is Cytoplasmic. Acidic residues predominate over residues isoleucine 16 to proline 32. Coiled coils occupy residues leucine 276–alanine 436, valine 493–leucine 516, lysine 570–threonine 590, valine 684–serine 805, and isoleucine 845–lysine 1082. A compositionally biased stretch (polar residues) spans aspartate 1177–serine 1190. A disordered region spans residues aspartate 1177–serine 1198. Coiled coils occupy residues asparagine 1251–asparagine 1310, isoleucine 1362–lysine 1424, leucine 1522–glutamate 1542, and leucine 1603–glutamine 1630. The helical; Anchor for type IV membrane protein transmembrane segment at leucine 1749–isoleucine 1766 threads the bilayer. Leucine 1767 is a topological domain (vesicular).

In terms of assembly, interacts with SYP41. In terms of tissue distribution, expressed ubiquitously in roots, leaves and flowers, and, to a lower extent, in stems.

The protein localises to the golgi apparatus. It is found in the trans-Golgi network membrane. Functionally, tethering factor involved in vesicle fusion at the trans-Golgi network (TGN) thus being required for efficient protein trafficking to the vacuole. Implicated in resistance to salt and osmotic stresses. Modulates the cell morphology (e.g. epidermal cell file rotation (CFR) and cell expansion) in mature regions of roots and the base of hypocotyls as well as root skewing, a process leading to root movement within the soil in order to maximize anchorage and nutrient acquisition, probably by regulating microtubule stabilization independently of their orientation. This chain is Trans-Golgi network-localized SYP41-interacting protein 1, found in Arabidopsis thaliana (Mouse-ear cress).